The chain runs to 199 residues: Recombination protein RecR (199 aa).

The C4-type zinc-finger motif lies at 58–73 (CKVCTNLTDQEVCNIC). Residues 81–176 (LLICVVEDPR…KVSRIAHGIP (96 aa)) enclose the Toprim domain.

Belongs to the RecR family.

Its function is as follows. May play a role in DNA repair. It seems to be involved in an RecBC-independent recombinational process of DNA repair. It may act with RecF and RecO. The polypeptide is Recombination protein RecR (Alkaliphilus oremlandii (strain OhILAs) (Clostridium oremlandii (strain OhILAs))).